We begin with the raw amino-acid sequence, 735 residues long: 5-methyltetrahydropteroyltriglutamate--homocysteine methyltransferase (735 aa).

5-methyltetrahydropteroyltri-L-glutamate-binding positions include 15–18 (REFK) and Lys-104. Residues 409 to 411 (IGS) and Glu-462 each bind L-homocysteine. Residues 409–411 (IGS) and Glu-462 contribute to the L-methionine site. Residues 493 to 494 (RC) and Trp-539 contribute to the 5-methyltetrahydropteroyltri-L-glutamate site. An L-homocysteine-binding site is contributed by Asp-577. L-methionine is bound at residue Asp-577. Residue Glu-583 participates in 5-methyltetrahydropteroyltri-L-glutamate binding. Residues His-618, Cys-620, and Glu-642 each contribute to the Zn(2+) site. His-672 functions as the Proton donor in the catalytic mechanism. Position 704 (Cys-704) interacts with Zn(2+).

This sequence belongs to the vitamin-B12 independent methionine synthase family. Zn(2+) is required as a cofactor.

It catalyses the reaction 5-methyltetrahydropteroyltri-L-glutamate + L-homocysteine = tetrahydropteroyltri-L-glutamate + L-methionine. It participates in amino-acid biosynthesis; L-methionine biosynthesis via de novo pathway; L-methionine from L-homocysteine (MetE route): step 1/1. Its function is as follows. Catalyzes the transfer of a methyl group from 5-methyltetrahydrofolate to homocysteine resulting in methionine formation. The chain is 5-methyltetrahydropteroyltriglutamate--homocysteine methyltransferase from Thermotoga petrophila (strain ATCC BAA-488 / DSM 13995 / JCM 10881 / RKU-1).